The primary structure comprises 236 residues: Probable methylthioribulose-1-phosphate dehydratase (236 aa).

The tract at residues 1–29 is disordered; that stretch reads MQNVQQPKKRKLSDEIIAEDEDYQRDPEH. Cys103 is a binding site for substrate. Zn(2+) is bound by residues His121, His123, and His201.

Belongs to the aldolase class II family. MtnB subfamily. Zn(2+) is required as a cofactor.

It localises to the cytoplasm. It catalyses the reaction 5-(methylsulfanyl)-D-ribulose 1-phosphate = 5-methylsulfanyl-2,3-dioxopentyl phosphate + H2O. It functions in the pathway amino-acid biosynthesis; L-methionine biosynthesis via salvage pathway; L-methionine from S-methyl-5-thio-alpha-D-ribose 1-phosphate: step 2/6. Functionally, catalyzes the dehydration of methylthioribulose-1-phosphate (MTRu-1-P) into 2,3-diketo-5-methylthiopentyl-1-phosphate (DK-MTP-1-P). This is Probable methylthioribulose-1-phosphate dehydratase from Trichoplax adhaerens (Trichoplax reptans).